Here is a 657-residue protein sequence, read N- to C-terminus: MAPWLELVFDVPLDKSFTYRACAAHAGEALVGRRVLAPFGARTLIGFVISESHSSPADCGGAVGTFKEIIRVIDREALFDQTHLACARWMAHFYLCALGQALCAVVPSRKRERTLSSFASCAGVRRTDTYALSGEQRKAIDAITASTGARSFYVHGVTGSGKTEVFLRAAEAVLARGKSVIYLVPEIALTHQVLQEVYVRFGSQAAVLHSALSGSQRLGEWRRIQCMRHCVVIGARSAIFAPLKRLGLVIMDEEHDSSYKSAHVPRYHARQVAMYRCADANCPFVMGSATPSVEAWYAMLRGAVRRLPLTARVAGGAPPRVEVVDVSKEALLLSTRLVDEIRKTKEAGYQSMLFLNRRGFSYSFQCRSCGYTLCCTQCAVPLTWHKRVGAMQCHYCGRQEAPPESCPCCHSFDTRYGGVGTEYIEEAVQALFPEYRIARVDTDALRSGHVQQTMEQFRAGKIDVLLGTQMIAKGFNFPTLRLVGIACADTGLHTPDFRAAERSFALMMQVAGRAGRYVDNGLVIIQTRNPAHPAVVCAQHGDCESFYAQELAQREALCFPPFVRLIRFVFRSKTRRKAKDAAYAAHALLTAQMPLGADVLGPAACVVAQVAGSYRMQILLRAPSFPVVQQVARSFLDEFRAPAGVYVESDVDPVNVL.

The 167-residue stretch at Ile-143–Leu-309 folds into the Helicase ATP-binding domain. Gly-156 to Thr-163 is an ATP binding site. The short motif at Asp-252–His-255 is the DEAH box element. Residues Cys-366, Cys-369, Cys-375, Cys-378, Cys-393, Cys-396, Cys-406, and Cys-409 each coordinate Zn(2+). A Helicase C-terminal domain is found at Ala-390–Phe-570.

Belongs to the helicase family. PriA subfamily. Component of the replication restart primosome. Zn(2+) serves as cofactor.

It carries out the reaction Couples ATP hydrolysis with the unwinding of duplex DNA by translocating in the 3'-5' direction.. It catalyses the reaction ATP + H2O = ADP + phosphate + H(+). Functionally, initiates the restart of stalled replication forks, which reloads the replicative helicase on sites other than the origin of replication. Recognizes and binds to abandoned replication forks and remodels them to uncover a helicase loading site. Promotes assembly of the primosome at these replication forks. This chain is Replication restart protein PriA, found in Treponema pallidum (strain Nichols).